A 71-amino-acid polypeptide reads, in one-letter code: MEWDEFKGIFYTNPIFALLAPGISLNNIKELCRERDEILHEDRKEEIIKIIHKIKKTYEALPDPDKDFAYC.

This is an uncharacterized protein from Dictyostelium discoideum (Social amoeba).